Here is a 710-residue protein sequence, read N- to C-terminus: Choline transporter-like protein 4 (710 aa).

At 1–34 (MGGKQRDEDDEAYGKPVKYDPSFRGPIKNRSCTD) the chain is on the cytoplasmic side. The helical transmembrane segment at 35–55 (VICCVLFLLFILGYIVVGIVA) threads the bilayer. At 56-229 (WLYGDPRQVL…KIFEDFAQSW (174 aa)) the chain is on the extracellular side. Residues Asn69, Asn155, and Asn197 are each glycosylated (N-linked (GlcNAc...) asparagine). Residues 230 to 250 (YWILVALGVALVLSLLFILLL) traverse the membrane as a helical segment. Over 251-252 (RL) the chain is Cytoplasmic. The helical transmembrane segment at 253-273 (VAGPLVLVLILGVLGVLAYGI) threads the bilayer. At 274–309 (YYCWEEYRVLRDKGASISQLGFTTNLSAYQSVQETW) the chain is on the extracellular side. A glycan (N-linked (GlcNAc...) asparagine) is linked at Asn298. The chain crosses the membrane as a helical span at residues 310-330 (LAALIVLAVLEAILLLMLIFL). The Cytoplasmic segment spans residues 331–358 (RQRIRIAIALLKEASKAVGQMMSTMFYP). The helical transmembrane segment at 359 to 379 (LVTFVLLLICIAYWAMTALYL) threads the bilayer. Residues 380–455 (ATSGQPQYVL…GVLGLFWTLN (76 aa)) are Extracellular-facing. N-linked (GlcNAc...) asparagine glycans are attached at residues Asn393, Asn405, and Asn416. A helical transmembrane segment spans residues 456–476 (WVLALGQCVLAGAFASFYWAF). The Cytoplasmic segment spans residues 477-501 (HKPQDIPTFPLISAFIRTLRYHTGS). The chain crosses the membrane as a helical span at residues 502-522 (LAFGALILTLVQIARVILEYI). The Extracellular segment spans residues 523 to 560 (DHKLRGVQNPVARCIMCCFKCCLWCLEKFIKFLNRNAY). Residues 561–581 (IMIAIYGKNFCVSAKNAFMLL) traverse the membrane as a helical segment. Over 582–597 (MRNIVRVVVLDKVTDL) the chain is Cytoplasmic. The helical transmembrane segment at 598 to 618 (LLFFGKLLVVGGVGVLSFFFF) threads the bilayer. Over 619 to 638 (SGRIPGLGKDFKSPHLNYYW) the chain is Extracellular. Residues 639–659 (LPIMTSILGAYVIASGFFSVF) traverse the membrane as a helical segment. The Cytoplasmic segment spans residues 660-710 (GMCVDTLFLCFLEDLERNNGSLDRPYYMSKSLLKILGKKNEAPPDNKKRKK).

The protein belongs to the CTL (choline transporter-like) family. Post-translationally, N-glycosylated; N-glycosylation of Asn-69, Asn-155 and Asn-393 is required for a proper thiamine pyrophosphate uptake. In terms of tissue distribution, highly expressed in colon, also detected in prostate, trachea and lung. Isoform 3 is also expressed in colon but a lower levels. As to expression, expressed in colon at low levels.

It localises to the membrane. Its subcellular location is the apical cell membrane. It carries out the reaction choline(out) + n H(+)(in) = choline(in) + n H(+)(out). It catalyses the reaction thiamine diphosphate(out) = thiamine diphosphate(in). Choline transporter that plays a role in the choline-acetylcholine system and is required to the efferent innervation of hair cells in the olivocochlear bundle for the maintenance of physiological function of outer hair cells and the protection of hair cells from acoustic injury. Also described as a thiamine pyrophosphate transporter in colon, may mediate the absorption of microbiota-generated thiamine pyrophosphate and contribute to host thiamine (vitamin B1) homeostasis. Its function is as follows. Also has thiamine pyrophosphate transporter activity. The sequence is that of Choline transporter-like protein 4 from Homo sapiens (Human).